The chain runs to 218 residues: DNA endonuclease I-ChuI (218 aa).

Belongs to the LAGLIDADG endonuclease family.

It localises to the plastid. The protein resides in the chloroplast. In terms of biological role, probable endonuclease involved in intron homing. Encoded in the group-I intron of the subunit rRNA-encoding gene (rrnL), it generates a staggered cut with 4-nt (CTCG) 3'-OH overhangs 2 bp downstream from the intron insertion site. This Chlamydomonas applanata (Chlamydomonas humicola) protein is DNA endonuclease I-ChuI.